We begin with the raw amino-acid sequence, 571 residues long: ADNLAEFHVQNQECDSCHTPDGELSNDSLTYENTQCVSCHGTLEEVAETTKHEHYNAHASHFPGEVACTSCHSAHEKSMVYCDSCHSFDFNMPYAKKWQRDEPTIAELAKDKSERQAALASAPHDTVDVVVVGSGGAGFSAAISATDSGAKVILIEKEPVIGGNAKLAAGGMNAAWTDQQKAKKITDSPELMFEDTMKGGQNINDPALVKVLSSHSKDSVDWMTAMGADLTDVGMMGGASVNRAHRPTGGAGVGAHVVQVLYDNAVKRNIDLRMNTRGIEVLKDDKGTVKGILVKGMYKGYYWVKADAVILATGGFAKNNERVAKLDPSLKGFISTNQPGAVGDGLDVAENAGGALKDMQYIQAHPTLSVKGGVMVTEAVRGNGAILVNREGKRFVNEITTRDKASAAILAQTGKSAYLIFDDSVRKSLSKIDKYIGLGVAPTADSLVKLGKMEGIDGKALTETVARYNSLVSSGKDTDFERPNLPRALNEGNYYAIEVTPGVHHTMGGVMIDTKAEVMNAKKQVIPGLYGAGEVTGGVHGANRLGGNAISDIITFGRLAGEEAAKYSKKN.

Residues H8, C14, C17, H18, C36, C39, H40, H52, H58, H61, C68, C71, H72, A74, H75, C82, C85, H86, N91, and Y94 each coordinate heme c. Positions A118–N571 are flavoprotein-like. Residues A137, E156, N164, A165, A169, G170, G171, G278, and Q338 each contribute to the FAD site. G170 provides a ligand contact to succinate. H365, T377, and E378 together coordinate succinate. The fumarate site is built by T377, E378, and R402. Residue R402 is the Proton donor of the active site. Heme c is bound at residue K431. Position 504 (H504) interacts with succinate. H504 contacts fumarate. The FAD site is built by H505 and E534. Succinate contacts are provided by R544 and G547. 2 residues coordinate fumarate: R544 and G547. Positions 549 and 550 each coordinate FAD.

In terms of assembly, monomer. It depends on FAD as a cofactor. Requires heme c as cofactor.

The protein resides in the periplasm. The enzyme catalyses 2 Fe(III)-[cytochrome c] + succinate = fumarate + 2 Fe(II)-[cytochrome c] + 2 H(+). Its function is as follows. Flavocytochrome that catalyzes the reduction of fumarate to succinate. Is essential for fumarate respiration during anaerobic growth, acting as the terminal reductase. Receives electrons from the membrane-bound tetraheme c-type cytochrome CymA. In vitro, can use the artificial electron donor methyl viologen. The chain is Fumarate reductase (cytochrome) (fccA) from Shewanella frigidimarina.